A 342-amino-acid polypeptide reads, in one-letter code: Ferredoxin--NADP reductase (342 aa).

8 residues coordinate FAD: cysteine 17, aspartate 36, glutamine 44, tyrosine 49, valine 89, phenylalanine 124, aspartate 289, and threonine 330.

This sequence belongs to the ferredoxin--NADP reductase type 2 family. In terms of assembly, homodimer. It depends on FAD as a cofactor.

The enzyme catalyses 2 reduced [2Fe-2S]-[ferredoxin] + NADP(+) + H(+) = 2 oxidized [2Fe-2S]-[ferredoxin] + NADPH. This is Ferredoxin--NADP reductase from Bradyrhizobium sp. (strain BTAi1 / ATCC BAA-1182).